Reading from the N-terminus, the 388-residue chain is MPNFQKFETFDKLTTVPCPYAPDCGGCQHIGVPYGHQAQNKINDLSGLFTAAEVAFPKPLKVLSAGPAHLRDRLDFSLQDGRLGLYRTDRHEILDIEVCAQLSPALQGWLSEFRKIQWPFKRGSFRLRVGPEGQRGLWIDLANVDIKTLLDEQNILRSLQQQAFVEIGQRRKVPVWTGNEFKLRDPEHHVWFQSWMNDIPVNLYCQVASFTQPSHTANKIICDVIYDWVKRYKAQRLIEFGSGIGNLTFPALAGAESVLACEIDELSLQGLERSLNELPASMSHLKDRVTIYRRDFQKKLTQDFSQFDGVLANPPRSGLMGFLNPLKSLAPEQRPEFFIYMSCYPESMARDLVTLQECGYRMQEVYIVDQFPQTDHYEVLGLLQREKA.

Residues cysteine 18, cysteine 24, cysteine 27, and cysteine 99 each contribute to the [4Fe-4S] cluster site. Glutamine 212, glutamate 262, and asparagine 313 together coordinate S-adenosyl-L-methionine. The active-site Nucleophile is the cysteine 343.

The protein belongs to the class I-like SAM-binding methyltransferase superfamily. RNA M5U methyltransferase family.

This is an uncharacterized protein from Bdellovibrio bacteriovorus (strain ATCC 15356 / DSM 50701 / NCIMB 9529 / HD100).